A 194-amino-acid chain; its full sequence is Cytochrome b-245 light chain (194 aa).

Topologically, residues 2 to 7 (GQIEWA) are cytoplasmic. Residues 8–30 (MWANEQALASGLILVAGGIVATA) form a helical membrane-spanning segment. Topologically, residues 31–35 (GRFTQ) are extracellular. The helical transmembrane segment at 36–53 (WYFGTYAIAAGVLVCLLE) threads the bilayer. Topologically, residues 54–69 (YPRGSRAKGSTLERCG) are cytoplasmic. The stretch at 70–80 (QRYLTAVLKLL) is an intramembrane region. Topologically, residues 81-86 (GPLSRN) are cytoplasmic. The helical transmembrane segment at 87-104 (YYFRAALHLALSVPAGFL) threads the bilayer. Residue Leu105 is a topological domain, extracellular. Residues 106 to 126 (ATILGTVCLVIASIIYLLAAV) traverse the membrane as a helical segment. Residues 127–194 (RGEQWTPIEP…NPIPVTDEVV (68 aa)) lie on the Cytoplasmic side of the membrane. The tract at residues 134–194 (IEPRPKERPQ…NPIPVTDEVV (61 aa)) is disordered. Phosphothreonine is present on Thr147. A Glycyl lysine isopeptide (Lys-Gly) (interchain with G-Cter in ubiquitin) cross-link involves residue Lys149.

This sequence belongs to the p22phox family. Component of the phagocyte NADPH oxidase core complex/cytochrome b558 complex, composed of CYBB (heavy chain (beta)) and CYBA (light chain (alpha)). Component of the phagocyte NADPH oxidase complex composed of an obligatory core heterodimer formed by the membrane proteins CYBA and CYBB and the cytosolic regulatory subunits NCF1/p47-phox, NCF2/p67-phox, NCF4/p40-phox and the small GTPase RAC1 or RAC2. Interacts with NCF1 (via SH3 domain). Interacts with SH3PXD2A. Interacts with DUOX1, DUOX2 and TPO. Interacts with NOX4; this interaction mediates superoxide generation. Interacts with calprotectin (S100A8/9). Interacts with GBP7. Interacts with NOXO1. Forms a heterodimer with NOX3 and is essential for activity and cell membrane localization of NOX3. Interacts with NOX1. In terms of processing, phosphorylation at Thr-147 enhances NADPH oxidase activity by promoting NCF1/p47-phox binding. Ubiquitinated at Lys-149 likely by RNF145.

The protein resides in the cell membrane. Its function is as follows. Subunit of NADPH oxidase complexes that is required for the NADPH oxidase activity that generates, in various cell types, superoxide from molecular oxygen utilizing NADPH as an electron donor. Subunit of the phagocyte NADPH oxidase complex that mediates the transfer of electrons from cytosolic NADPH to O2 to produce the superoxide anion (O2(-)). In the activated complex, electrons are first transferred from NADPH to flavin adenine dinucleotide (FAD) and subsequently transferred via two heme molecules to molecular oxygen, producing superoxide through an outer-sphere reaction. Activation of the NADPH oxidase complex is initiated by the assembly of cytosolic subunits of the NADPH oxidase complex with the core NADPH oxidase complex to form a complex at the plasma membrane or phagosomal membrane. This activation process is initiated by phosphorylation dependent binding of the cytosolic NCF1/p47-phox subunit to the C-terminus of CYBA/p22-phox. Aassociates with NOX3 to form a functional NADPH oxidase constitutively generating superoxide. This is Cytochrome b-245 light chain from Oryctolagus cuniculus (Rabbit).